The following is a 261-amino-acid chain: Type II restriction enzyme Sau96I (261 aa).

Monomer.

It carries out the reaction Endonucleolytic cleavage of DNA to give specific double-stranded fragments with terminal 5'-phosphates.. In terms of biological role, a P subtype restriction enzyme that recognizes the double-stranded sequence 5'-GGNCC-3' and cleaves after G-1. This is Type II restriction enzyme Sau96I from Staphylococcus aureus.